A 90-amino-acid chain; its full sequence is Antitoxin epsilon (90 aa).

It belongs to the epsilon antitoxin family. In the presence of the zeta toxin, forms an inactive PezA(2)PezT(2) heterotetramer.

Antitoxin component of a type II toxin-antitoxin (TA) system. Neutralizes the toxic effect of cognate zeta toxin. Part of a postsegregational killing (PSK) system involved in the killing of plasmid-free cells. Continuous synthesis of the epsilon antitoxin is required to counteract the zeta toxin. This is Antitoxin epsilon from Streptococcus agalactiae.